Here is a 159-residue protein sequence, read N- to C-terminus: Ribosome maturation factor RimM (159 aa).

The 74-residue stretch at 86–159 (SDAFHLPKLI…IHIETIEGLI (74 aa)) folds into the PRC barrel domain.

Belongs to the RimM family. Binds ribosomal protein uS19.

It localises to the cytoplasm. An accessory protein needed during the final step in the assembly of 30S ribosomal subunit, possibly for assembly of the head region. Essential for efficient processing of 16S rRNA. May be needed both before and after RbfA during the maturation of 16S rRNA. It has affinity for free ribosomal 30S subunits but not for 70S ribosomes. In Acholeplasma laidlawii (strain PG-8A), this protein is Ribosome maturation factor RimM.